The chain runs to 171 residues: S-ribosylhomocysteine lyase (171 aa).

Fe cation-binding residues include His54, His58, and Cys128.

It belongs to the LuxS family. Homodimer. The cofactor is Fe cation.

It carries out the reaction S-(5-deoxy-D-ribos-5-yl)-L-homocysteine = (S)-4,5-dihydroxypentane-2,3-dione + L-homocysteine. In terms of biological role, involved in the synthesis of autoinducer 2 (AI-2) which is secreted by bacteria and is used to communicate both the cell density and the metabolic potential of the environment. The regulation of gene expression in response to changes in cell density is called quorum sensing. Catalyzes the transformation of S-ribosylhomocysteine (RHC) to homocysteine (HC) and 4,5-dihydroxy-2,3-pentadione (DPD). The sequence is that of S-ribosylhomocysteine lyase from Salmonella agona (strain SL483).